The following is a 119-amino-acid chain: Large ribosomal subunit protein uL14 (119 aa).

Belongs to the universal ribosomal protein uL14 family. As to quaternary structure, part of the 50S ribosomal subunit. Forms a cluster with proteins L3 and L19. In the 70S ribosome, L14 and L19 interact and together make contacts with the 16S rRNA in bridges B5 and B8.

Functionally, binds to 23S rRNA. Forms part of two intersubunit bridges in the 70S ribosome. In Anaplasma marginale (strain St. Maries), this protein is Large ribosomal subunit protein uL14.